Reading from the N-terminus, the 1599-residue chain is Protein TOPAZ1 (1599 aa).

4 disordered regions span residues 1–42 (MVAQ…KESL), 159–185 (GCMH…TDPS), 802–836 (PNVA…VPDP), and 867–889 (VTHE…SSDL). 2 stretches are compositionally biased toward basic and acidic residues: residues 168-183 (SKSK…DKTD) and 805-832 (AEEH…RELP). Residues 874–884 (NEKPGGLSEQT) show a composition bias toward polar residues.

Expressed in both adult testis and fetal ovary, mostly in germ cells (at protein level).

Its subcellular location is the cytoplasm. It localises to the cytosol. In terms of biological role, important for normal spermatogenesis and male fertility. Specifically required for progression to the post-meiotic stages of spermatocyte development. Seems to be necessary for normal expression levels of a number of testis-expressed gene transcripts, although its role in this process is unclear. In Ovis aries (Sheep), this protein is Protein TOPAZ1 (TOPAZ1).